Here is a 200-residue protein sequence, read N- to C-terminus: Phospholipase A2 inhibitor LNF1 (200 aa).

Residues 1–19 form the signal peptide; the sequence is MKYLHTICLLFIFVARGNS. Intrachain disulfides connect cysteine 22–cysteine 46, cysteine 25–cysteine 32, cysteine 39–cysteine 67, cysteine 73–cysteine 94, cysteine 95–cysteine 100, cysteine 118–cysteine 143, cysteine 136–cysteine 165, and cysteine 169–cysteine 191. N-linked (GlcNAc...) asparagine glycosylation occurs at asparagine 176.

It belongs to the CNF-like-inhibitor family. As to quaternary structure, occurs as a mixture of oligomers. Tetrameric arrangement appears to be the predominant quaternary structure. Expressed by the liver.

Its subcellular location is the secreted. In terms of biological role, inhibits the enzymatic activity of phospholipase A2 (PA2). This chain is Phospholipase A2 inhibitor LNF1, found in Lachesis muta muta (Bushmaster).